The sequence spans 133 residues: Small ribosomal subunit protein uS9 (133 aa).

A disordered region spans residues 114–133 (VERKKYGKKKARRSPQFSKR). A compositionally biased stretch (basic residues) spans 118–133 (KYGKKKARRSPQFSKR).

It belongs to the universal ribosomal protein uS9 family.

This is Small ribosomal subunit protein uS9 from Fusobacterium nucleatum subsp. nucleatum (strain ATCC 25586 / DSM 15643 / BCRC 10681 / CIP 101130 / JCM 8532 / KCTC 2640 / LMG 13131 / VPI 4355).